Consider the following 511-residue polypeptide: 2'-acyl-2-O-sulfo-trehalose (hydroxy)phthioceranyltransferase PapA1 (511 aa).

This sequence belongs to the PapA acyltransferase family.

It carries out the reaction a (hydroxy)phthioceranyl-[(hydroxy)phthioceranic acid synthase] + 2'-palmitoyl/stearoyl-2-O-sulfo-alpha,alpha-trehalose = a 3'-(hydroxy)phthioceranyl-2'-palmitoyl/stearoyl-2-O-sulfo-alpha,alpha-trehalose + holo-[(hydroxy)phthioceranic acid synthase].. Required for the biosynthesis of sulfolipid-1 (SL-1), a major mycobacterial cell wall lipid. Catalyzes the acylation of trehalose-2-sulfate-2'-palmitate (SL659) by adding the (hydroxy)phthioceranoyl group at the 3'-position to yield the diacylated intermediate 2-palmitoyl-3-(C43)-phthioceranyl-alpha, alpha'-D-trehalose-2'-sulfate (SL1278). This Mycobacterium tuberculosis (strain CDC 1551 / Oshkosh) protein is 2'-acyl-2-O-sulfo-trehalose (hydroxy)phthioceranyltransferase PapA1 (papA1).